The primary structure comprises 229 residues: MLLKRAAGKEKDDDNRAGERRRMVYEQLISRGIENDDVIQSMLEVPRHRFVPKHLQEYAYQDGPLAIGEGQTISQPYIVALMIEALEPAPSDRVLEVGTGSGYAAAVLSRIVSVVYTIERFDSLARGARSLFQSLKYDNIYVRTGDGTKGWPEAAPFDGIIVSAGAPAVPQTLCGQLKPGGRLVAPVGDKRWQELLVVRRALDGGYNVKKLGTVFFVPLVGEEGWHDET.

Serine 74 is a catalytic residue.

It belongs to the methyltransferase superfamily. L-isoaspartyl/D-aspartyl protein methyltransferase family.

Its subcellular location is the cytoplasm. The enzyme catalyses [protein]-L-isoaspartate + S-adenosyl-L-methionine = [protein]-L-isoaspartate alpha-methyl ester + S-adenosyl-L-homocysteine. Functionally, catalyzes the methyl esterification of L-isoaspartyl residues in peptides and proteins that result from spontaneous decomposition of normal L-aspartyl and L-asparaginyl residues. It plays a role in the repair and/or degradation of damaged proteins. The sequence is that of Protein-L-isoaspartate O-methyltransferase from Pelotomaculum thermopropionicum (strain DSM 13744 / JCM 10971 / SI).